The sequence spans 385 residues: 8-amino-7-oxononanoate synthase (385 aa).

Position 21 (arginine 21) interacts with substrate. 108-109 contributes to the pyridoxal 5'-phosphate binding site; the sequence is GF. A substrate-binding site is contributed by histidine 133. 3 residues coordinate pyridoxal 5'-phosphate: serine 179, histidine 207, and threonine 233. Lysine 236 is modified (N6-(pyridoxal phosphate)lysine). Substrate is bound at residue threonine 352.

Belongs to the class-II pyridoxal-phosphate-dependent aminotransferase family. BioF subfamily. Homodimer. Pyridoxal 5'-phosphate serves as cofactor.

It catalyses the reaction 6-carboxyhexanoyl-[ACP] + L-alanine + H(+) = (8S)-8-amino-7-oxononanoate + holo-[ACP] + CO2. The protein operates within cofactor biosynthesis; biotin biosynthesis. Catalyzes the decarboxylative condensation of pimeloyl-[acyl-carrier protein] and L-alanine to produce 8-amino-7-oxononanoate (AON), [acyl-carrier protein], and carbon dioxide. The polypeptide is 8-amino-7-oxononanoate synthase (Salmonella newport (strain SL254)).